Consider the following 512-residue polypeptide: FAD-dependent monooxygenase prx3 (512 aa).

Positions 1–19 (MLSLKAFLALSLSIHLSQG) are cleaved as a signal peptide. The FAD-binding PCMH-type domain maps to 63 to 235 (CQTTPTCVFA…TRFDLATFSV (173 aa)). Position 100 is a pros-8alpha-FAD histidine (histidine 100). 6 N-linked (GlcNAc...) asparagine glycosylation sites follow: asparagine 197, asparagine 281, asparagine 307, asparagine 329, asparagine 361, and asparagine 477.

This sequence belongs to the oxygen-dependent FAD-linked oxidoreductase family.

It functions in the pathway sesquiterpene biosynthesis. FAD-dependent monooxygenase; part of the gene cluster that mediates the biosynthesis of PR-toxin, a bicyclic sesquiterpene belonging to the eremophilane class and acting as a mycotoxin. The first step of the pathway is catalyzed by the aristolochene synthase which performs the cyclization of trans,trans-farnesyl diphosphate (FPP) to the bicyclic sesquiterpene aristolochene. Following the formation of aristolochene, the non-oxygenated aristolochene is converted to the trioxygenated intermediate eremofortin B, via 7-epi-neopetasone. This conversion appears to involve three enzymes, a hydroxysterol oxidase-like enzyme, the quinone-oxidase prx3 that forms the quinone-type-structure in the bicyclic nucleus of aristolochene with the C8-oxo group and the C-3 hydroxyl group, and the P450 monooxygenase ORF6 that introduces the epoxide at the double bond between carbons 1 and 2. No monoxy or dioxy-intermediates have been reported to be released to the broth, so these three early oxidative reactions may be coupled together. Eremofortin B is further oxidized by another P450 monooxygenase, that introduces a second epoxide between carbons 7 and 11 prior to acetylation to eremofortin A by the acetyltransferase ORF8. The second epoxidation may be performed by a second P450 monooxygenase. After the acetylation step, eremofortin A is converted to eremofortin C and then to PR-toxin. First the conversion of eremofortin A to eremofortin C proceeds by oxidation of the side chain of the molecule at C-12 and is catalyzed by the short-chain oxidoreductase prx1. The cytochrome P450 monooxygenase ORF6 is probably also involved in this step. The primary alcohol formed at C-12 is finally oxidized by the short-chain alcohol dehydrogenase prx4 that forms PR-toxin. The chain is FAD-dependent monooxygenase prx3 from Penicillium roqueforti (strain FM164).